A 360-amino-acid chain; its full sequence is Glutamate 5-kinase (360 aa).

K7 contributes to the ATP binding site. The substrate site is built by S47, D134, and N146. ATP contacts are provided by residues 166 to 167 (TD) and 210 to 216 (TGGISTK). The 82-residue stretch at 275–356 (VGKITLDDGA…SSIIVVHRDV (82 aa)) folds into the PUA domain.

This sequence belongs to the glutamate 5-kinase family.

Its subcellular location is the cytoplasm. The catalysed reaction is L-glutamate + ATP = L-glutamyl 5-phosphate + ADP. The protein operates within amino-acid biosynthesis; L-proline biosynthesis; L-glutamate 5-semialdehyde from L-glutamate: step 1/2. Catalyzes the transfer of a phosphate group to glutamate to form L-glutamate 5-phosphate. This chain is Glutamate 5-kinase, found in Prochlorococcus marinus (strain MIT 9301).